Consider the following 101-residue polypeptide: MILEHVLVLSAYLFLIGLYGLITSRNMVRALMCLELILNAVNMNFVTFSDFFDNSQLKGDIFCIFVIAIAAAEAAIGLAIVSSIYRNRKSTRINQSILLNK.

3 helical membrane-spanning segments follow: residues 2-22 (ILEH…YGLI), 32-52 (MCLE…SDFF), and 61-81 (IFCI…LAIV).

This sequence belongs to the complex I subunit 4L family. In terms of assembly, NDH is composed of at least 16 different subunits, 5 of which are encoded in the nucleus.

The protein localises to the plastid. It localises to the chloroplast thylakoid membrane. The catalysed reaction is a plastoquinone + NADH + (n+1) H(+)(in) = a plastoquinol + NAD(+) + n H(+)(out). It catalyses the reaction a plastoquinone + NADPH + (n+1) H(+)(in) = a plastoquinol + NADP(+) + n H(+)(out). NDH shuttles electrons from NAD(P)H:plastoquinone, via FMN and iron-sulfur (Fe-S) centers, to quinones in the photosynthetic chain and possibly in a chloroplast respiratory chain. The immediate electron acceptor for the enzyme in this species is believed to be plastoquinone. Couples the redox reaction to proton translocation, and thus conserves the redox energy in a proton gradient. This chain is NAD(P)H-quinone oxidoreductase subunit 4L, chloroplastic, found in Arabis hirsuta (Hairy rock-cress).